The sequence spans 407 residues: Putative cystathionine beta-lyase (407 aa).

N6-(pyridoxal phosphate)lysine is present on lysine 237.

This sequence belongs to the class-II pyridoxal-phosphate-dependent aminotransferase family. MalY/PatB cystathionine beta-lyase subfamily. Requires pyridoxal 5'-phosphate as cofactor.

The catalysed reaction is L,L-cystathionine + H2O = L-homocysteine + pyruvate + NH4(+). It catalyses the reaction an S-substituted L-cysteine + H2O = a thiol + pyruvate + NH4(+). Its pathway is amino-acid biosynthesis; L-methionine biosynthesis via de novo pathway; L-homocysteine from L-cystathionine: step 1/1. The polypeptide is Putative cystathionine beta-lyase (Mycobacterium tuberculosis (strain CDC 1551 / Oshkosh)).